Consider the following 238-residue polypeptide: tRNA (guanine-N(7)-)-methyltransferase (238 aa).

S-adenosyl-L-methionine is bound by residues Glu70, Asp95, Asp122, and Asp145. The active site involves Asp145. Substrate contacts are provided by residues Lys149, Asp181, and Thr216–Glu219.

The protein belongs to the class I-like SAM-binding methyltransferase superfamily. TrmB family.

The enzyme catalyses guanosine(46) in tRNA + S-adenosyl-L-methionine = N(7)-methylguanosine(46) in tRNA + S-adenosyl-L-homocysteine. It functions in the pathway tRNA modification; N(7)-methylguanine-tRNA biosynthesis. Catalyzes the formation of N(7)-methylguanine at position 46 (m7G46) in tRNA. In Neisseria meningitidis serogroup A / serotype 4A (strain DSM 15465 / Z2491), this protein is tRNA (guanine-N(7)-)-methyltransferase.